Here is a 306-residue protein sequence, read N- to C-terminus: Lipoyl synthase (306 aa).

7 residues coordinate [4Fe-4S] cluster: Cys-52, Cys-57, Cys-63, Cys-78, Cys-82, Cys-85, and Ser-289. The Radical SAM core domain occupies 64–278; it reads WNRKTATYML…KETAYKIGFK (215 aa).

The protein belongs to the radical SAM superfamily. Lipoyl synthase family. It depends on [4Fe-4S] cluster as a cofactor.

Its subcellular location is the cytoplasm. The catalysed reaction is [[Fe-S] cluster scaffold protein carrying a second [4Fe-4S](2+) cluster] + N(6)-octanoyl-L-lysyl-[protein] + 2 oxidized [2Fe-2S]-[ferredoxin] + 2 S-adenosyl-L-methionine + 4 H(+) = [[Fe-S] cluster scaffold protein] + N(6)-[(R)-dihydrolipoyl]-L-lysyl-[protein] + 4 Fe(3+) + 2 hydrogen sulfide + 2 5'-deoxyadenosine + 2 L-methionine + 2 reduced [2Fe-2S]-[ferredoxin]. Its pathway is protein modification; protein lipoylation via endogenous pathway; protein N(6)-(lipoyl)lysine from octanoyl-[acyl-carrier-protein]: step 2/2. In terms of biological role, catalyzes the radical-mediated insertion of two sulfur atoms into the C-6 and C-8 positions of the octanoyl moiety bound to the lipoyl domains of lipoate-dependent enzymes, thereby converting the octanoylated domains into lipoylated derivatives. The chain is Lipoyl synthase from Leptospira biflexa serovar Patoc (strain Patoc 1 / Ames).